The primary structure comprises 388 residues: Oligogalacturonide lyase (388 aa).

The protein resides in the periplasm. It carries out the reaction 4-(4-deoxy-alpha-D-galact-4-enuronosyl)-D-galacturonate = 2 5-dehydro-4-deoxy-D-glucuronate. Its pathway is glycan metabolism; pectin degradation; 2-dehydro-3-deoxy-D-gluconate from pectin: step 3/5. Involved in degradation of pectin, which causes soft-rod disease in plants. This chain is Oligogalacturonide lyase (ogl), found in Pectobacterium atrosepticum (strain SCRI 1043 / ATCC BAA-672) (Erwinia carotovora subsp. atroseptica).